Reading from the N-terminus, the 353-residue chain is Outer membrane protein A (353 aa).

Residues 1–21 (MKKTAIALAVALVGFATVAQA) form the signal peptide. The next 8 membrane-spanning stretches (beta stranded) occupy residues 27 to 37 (TWYTGGKLGWS), 56 to 67 (QLGAGAFFGYQA), 71 to 79 (LGFEMGYDW), 97 to 108 (QGVQLAAKLSYP), 113 to 121 (LDVYTRLGG), 148 to 157 (PLVALGAEYA), 162 to 169 (WATRMEYQ), and 188 to 196 (LLSVGVSYR). A run of 4 repeats spans residues 208–209 (AP), 210–211 (TP), 212–213 (AP), and 214–215 (AP). The segment at 208–215 (APTPAPAP) is 4 X 2 AA approximate tandem repeats of A-P. Residues 217-345 (VDTKRFTLKS…RVEIEVKGYK (129 aa)) enclose the OmpA-like domain. Cysteines 318 and 330 form a disulfide.

The protein belongs to the outer membrane OOP (TC 1.B.6) superfamily. OmpA family. Monomer and homodimer.

It is found in the cell outer membrane. Functionally, with TolR probably plays a role in maintaining the position of the peptidoglycan cell wall in the periplasm. Acts as a porin with low permeability that allows slow penetration of small solutes; an internal gate slows down solute passage. This chain is Outer membrane protein A, found in Yersinia pseudotuberculosis serotype I (strain IP32953).